A 695-amino-acid polypeptide reads, in one-letter code: Segment polarity protein dishevelled homolog DVL-1 (695 aa).

The DIX domain maps to 1–85 (MAETKIIYHM…RVVSWLVLAE (85 aa)). Positions 89-236 (SDAGSQGTDS…RLRQTDRASS (148 aa)) are disordered. Positions 142–151 (SHRRERARRR) are enriched in basic residues. Residues 152–171 (NRDEAARTNGHPRGDRRREL) are compositionally biased toward basic and acidic residues. Positions 177–192 (SASTVLSSELESSSFI) are enriched in low complexity. S194 bears the Phosphoserine mark. Over residues 201-214 (SRLSSSTEQSTSSR) the composition is skewed to low complexity. Over residues 215 to 228 (LIRKHKCRRRKQRL) the composition is skewed to basic residues. Residues 251–323 (TVTLNMERHH…NDDAVRVLRE (73 aa)) form the PDZ domain. The region spanning 425-499 (PDSGLEIRDR…SEQCYYVFGD (75 aa)) is the DEP domain. The span at 551 to 580 (PAYQDPGFSYGSGSAGSQQSEGSKSSGSTR) shows a compositional bias: low complexity. Positions 551–641 (PAYQDPGFSY…SQASAVAPGL (91 aa)) are disordered. Positions 622–635 (SQLSRGSSPRSQAS) are enriched in polar residues.

It belongs to the DSH family. In terms of assembly, interacts with BRD7 and INVS. Interacts (via PDZ domain) with the VANGL1 and VANGL2 (via C-terminus). Interacts (via PDZ domain) with NXN. Interacts with CXXC4. Interacts with ARRB1; the interaction is enhanced by phosphorylation of DVL1. Interacts with CYLD. Interacts (via PDZ domain) with RYK. Self-associates (via DIX domain) and forms higher homooligomers. Interacts (via PDZ domain) with DACT1 and FZD7, where DACT1 and FZD7 compete for the same binding site. Interacts (via DEP domain) with MUSK; the interaction is direct and mediates the formation a DVL1, MUSK and PAK1 ternary complex involved in AChR clustering. Interacts (via PDZ domain) with TMEM88. Interacts with DCDC2. Interacts with FOXK2. Interacts with PKD1 (via extracellular domain). Interacts (via PDZ domain) with CCDC88C/DAPLE; competes with CCDC88C for binding to frizzled receptor FZD7 and dissociates from CCDC88C following initiation of non-canonical Wnt signaling when CCDC88C displaces DVL1 from ligand-activated FZD7. Post-translationally, ubiquitinated; undergoes both 'Lys-48'-linked ubiquitination, leading to its subsequent degradation by the ubiquitin-proteasome pathway, and 'Lys-63'-linked ubiquitination. The interaction with INVS is required for ubiquitination. Deubiquitinated by CYLD, which acts on 'Lys-63'-linked ubiquitin chains.

The protein resides in the cell membrane. Its subcellular location is the cytoplasm. The protein localises to the cytosol. It localises to the cytoplasmic vesicle. Its function is as follows. Participates in Wnt signaling by binding to the cytoplasmic C-terminus of frizzled family members and transducing the Wnt signal to down-stream effectors. Plays a role both in canonical and non-canonical Wnt signaling. Plays a role in the signal transduction pathways mediated by multiple Wnt genes. Required for LEF1 activation upon WNT1 and WNT3A signaling. DVL1 and PAK1 form a ternary complex with MUSK which is important for MUSK-dependent regulation of AChR clustering during the formation of the neuromuscular junction (NMJ). The polypeptide is Segment polarity protein dishevelled homolog DVL-1 (Dvl1) (Rattus norvegicus (Rat)).